A 1044-amino-acid polypeptide reads, in one-letter code: MFKKVENKVHFPQLEEKILQFWNDNKIFEKSMKQREGCEEFTFYDGPPFATGLPHFGHFVPNTIKDIIPRYQTMKGKHVKRYFGWDTHGLPVEYEVEKSLKLSGRYEIEQYGIDKFNEECRNIVLRYTKEWKKIITRLGRWVDFENNYKTMDLTFMESVWWVFKTLYNKGLIYESYYVLPYSPKLATPLSNFEVNLGEYKEIHDPSLTIKFKIKDKNEYLLAWTTTPWTLPTNLGIAVGKDIDYSKVLDQEKNEIYIIGTKRLNHYYQDENKYVIIEQFKGEHLKGIEYEPLFDYFVNQRNKGAFKIHTAEYVTTDDGTGIVHIAPFGEEDYQILKKNTQTDMITPIDAECKFTSEVKDFEGLFVKDADNKIIEKLKSMNLLFKRENYLHRYPFCYRTNSPLIYRPISSWFVNIEKIKEKLIRSNEQINWIPEHLKKGRFGKWLENARDWAISRNRFWGNPIPIWKCSKTGNKICIGSREELEKLSGQKIIDLHKDKIDKITWPSKYGGTYVRTSEVLDCWFESGSMPYASKHYPFKDKDKFQNIFPADFIAEGLDQTRGWFYTLTILGTALFEKTAFKNVIVNGLVLSSDGKKMSKSLKNYTDPIQIINTFGADALRLYLIMSPVIKADDLKYSDDGVKDVLKNIIIPIWNAYSFFITYAIIDKFTPNNHVNLYKTNILDKWIISEIESLKQILNEEIDKYNLTKSIDVLLTFIDKLNNWYIRRSRRRFWKSENDNDKTDAYETLYYTLKNLMLMLAPFIPFLTEEIYQNLKTKNEKESIHLNDYPQSIKELINIELEEKMNFTRKVITIARALRASHNIKIRKPIKTIYIITKNHKEQNTLREMTEIILEEINAKEIKIKSNEEELVTYKAKANFKELGSKLGTNMKSVALAITKLSNEDILEIINGNKHTITINNNTYDITLKDIILERHERKNLKVINEDSITIGLDTLITEELYLEGLSRELIRKVQNLRKESNFNVTDRIILYTNNDEILTKIINNFENYIKTETLAITIEINNKKALKTLELDEEISVNIGIEKCLN.

Positions 48 to 58 (PFATGLPHFGH) match the 'HIGH' region motif. The 'KMSKS' region signature appears at 594–598 (KMSKS). K597 is a binding site for ATP.

This sequence belongs to the class-I aminoacyl-tRNA synthetase family. IleS type 2 subfamily. In terms of assembly, monomer. Requires Zn(2+) as cofactor.

The protein localises to the cytoplasm. It carries out the reaction tRNA(Ile) + L-isoleucine + ATP = L-isoleucyl-tRNA(Ile) + AMP + diphosphate. Functionally, catalyzes the attachment of isoleucine to tRNA(Ile). As IleRS can inadvertently accommodate and process structurally similar amino acids such as valine, to avoid such errors it has two additional distinct tRNA(Ile)-dependent editing activities. One activity is designated as 'pretransfer' editing and involves the hydrolysis of activated Val-AMP. The other activity is designated 'posttransfer' editing and involves deacylation of mischarged Val-tRNA(Ile). This Borrelia duttonii (strain Ly) protein is Isoleucine--tRNA ligase.